A 391-amino-acid chain; its full sequence is Probable sugar efflux transporter (391 aa).

The next 12 helical transmembrane spans lie at 16–36, 51–71, 82–102, 103–123, 138–158, 170–190, 210–230, 247–267, 277–297, 300–320, 338–358, and 361–381; these read VFVFSLSAFIFNTTEFVPVAL, VGLMITAYAWVVSLGSLPLML, LLFLFALFILSHILSALAWNF, WVLLISRMGIAFAHSIFWSIT, QALGLLALGSSLAMILGLPLG, TFGVIGGVATLIMLLMWKLLP, PLLVGIYLLVIMVISGHFTTY, ITTLMLFVFGLAGVAGSFLFG, FIAFAMVLVICPQLLLFVFKN, WVIFLQIFLWGIGITSLTIAL, IFSGSYNVGIGSGALFGSIVI, and LGLEYIGFVGGALGLLALFWL.

This sequence belongs to the major facilitator superfamily. SotB (TC 2.A.1.2) family.

Its subcellular location is the cell inner membrane. Functionally, involved in the efflux of sugars. The physiological role may be the reduction of the intracellular concentration of toxic sugars or sugar metabolites. The sequence is that of Probable sugar efflux transporter from Helicobacter pylori (strain P12).